Here is a 143-residue protein sequence, read N- to C-terminus: Small ribosomal subunit protein uS12 (143 aa).

Residues 1-20 (MGKPRGLRTARKLKNHRREQ) are compositionally biased toward basic residues. Positions 1 to 28 (MGKPRGLRTARKLKNHRREQRWHDKDYK) are disordered. Pro62 is subject to Hydroxyproline.

The protein belongs to the universal ribosomal protein uS12 family. As to quaternary structure, component of the 40S small ribosomal subunit.

It localises to the cytoplasm. It is found in the cytosol. The protein localises to the rough endoplasmic reticulum. The sequence is that of Small ribosomal subunit protein uS12 (RPS23) from Lumbricus rubellus (Humus earthworm).